The following is a 38-amino-acid chain: DNA binding protein VP8 (38 aa).

Positions 1-16 (MKRKPMSRKASQKTFK) are enriched in basic residues. The tract at residues 1–38 (MKRKPMSRKASQKTFKKNTGVQRMNHLNPRAMRGGIRL) is disordered.

This sequence belongs to the microviridae J protein family.

The protein localises to the virion. The protein resides in the host cytoplasm. Mediates ssDNA packaging into virion, it locates to the internal surface of the capsid, thereby displacing the internal scaffolding protein VP3 during virion formation. Additionally, protein VP8 plays a role in viral attachment to the host cell. The protein is DNA binding protein VP8 of Bdellovibrio phage phiMH2K (Bacteriophage phiMH2K).